A 1063-amino-acid polypeptide reads, in one-letter code: Structural polyprotein (1063 aa).

The disordered stretch occupies residues 23–131 (LRAELAAGAS…LGPPTNPFQA (109 aa)). The tract at residues 30 to 69 (GASQLRRPRPPRQRDSSTSGDDSGRDSGGPRRRRGNRGRG) is human C1QBP/SF2P32-binding. Residue Ser46 is modified to Phosphoserine; by host. The span at 59 to 69 (PRRRRGNRGRG) shows a compositional bias: basic residues. The segment covering 70-87 (QRKDWSKAPPPPEERQES) has biased composition (basic and acidic residues). The segment covering 93-107 (VPKPPRAPPQPPQPP) has biased composition (pro residues). Cysteines 153 and 197 form a disulfide. The functions as E2 signal peptide stretch occupies residues 279–300 (GAPQVFLAGLLLAAVAVGTARA). Residues 301-534 (GLQPRTDIAA…LWLATANALS (234 aa)) lie on the Extracellular side of the membrane. Residues 305–327 (RTDIAAPPAPPQAPRAHGKHYGH) are disordered. N-linked (GlcNAc...) asparagine; by host glycosylation is found at Asn353, Asn371, Asn410, and Asn429. The helical transmembrane segment at 535–555 (LDHALAAVVLLVPWVLIFMLC) threads the bilayer. Over 556–582 (RRACRRRGAAAALTAVVLQGYNPPAYG) the chain is Cytoplasmic. The interval 562-582 (RGAAAALTAVVLQGYNPPAYG) is functions as E1 signal peptide. Over 583–1028 (EEAFTYLCTA…QTWAEWAAAH (446 aa)) the chain is Extracellular. 8 disulfide bridges follow: Cys590/Cys595, Cys619/Cys824, Cys641/Cys653, Cys699/Cys712, Cys758/Cys767, Cys807/Cys817, Cys931/Cys934, and Cys950/Cys983. Asn658 carries an N-linked (GlcNAc...) asparagine; by host glycan. Ca(2+) contacts are provided by Asn670 and Ala671. Residues Asp718 and Thr719 each contribute to the Ca(2+) site. Asn759 and Asn791 each carry an N-linked (GlcNAc...) asparagine; by host glycan. O-linked (GalNAc...) threonine; by host glycosylation is found at Thr1011 and Thr1012. A helical membrane pass occupies residues 1029–1049 (WWQLTLGAICALLLAGLLACC). The Extracellular segment spans residues 1050-1063 (AKCLYHLRGAIAPR).

As to quaternary structure, homodimer; further assembles into homooligomer. Interacts with human C1QBP. Interacts (via N-terminus) with protease/methyltransferase p150. Heterodimer with spike glycoprotein E2. In terms of assembly, heterodimer with spike glycoprotein E1. In terms of processing, structural polyprotein: Specific enzymatic cleavages in vivo yield mature proteins. Two signal peptidase-mediated cleavages within the polyprotein produce the structural proteins capsid, E2, and E1. The E2 signal peptide remains attached to the C-terminus of the capsid protein after cleavage by the signal peptidase. Another signal peptide at E2 C-terminus directs E1 to the ER, with a similar mechanism. Contains three N-linked oligosaccharides. Post-translationally, capsid is phosphorylated on Ser-46 by host. This phosphorylation negatively regulates capsid protein RNA-binding activity. Dephosphorylated by human PP1A.

The protein localises to the virion. The protein resides in the host cytoplasm. It localises to the host mitochondrion. Its subcellular location is the virion membrane. It is found in the host Golgi apparatus membrane. In terms of biological role, capsid protein interacts with genomic RNA and assembles into icosahedric core particles 65-70 nm in diameter. The resulting nucleocapsid eventually associates with the cytoplasmic domain of E2 at the cell membrane, leading to budding and formation of mature virions from host Golgi membranes. Phosphorylation negatively regulates RNA-binding activity, possibly delaying virion assembly during the viral replication phase. Capsid protein dimerizes and becomes disulfide-linked in the virion. Modulates genomic RNA replication. Modulates subgenomic RNA synthesis by interacting with human C1QBP/SF2P32. Induces both perinuclear clustering of mitochondria and the formation of electron-dense intermitochondrial plaques, both hallmarks of rubella virus infected cells. Induces apoptosis when expressed in transfected cells. Its function is as follows. Responsible for viral attachment to target host cell, by binding to the cell receptor. Its transport to the plasma membrane depends on interaction with E1 protein. The surface glycoproteins display an irregular helical organization and a pseudo-tetrameric inner nucleocapsid arrangement. Class II viral fusion protein. Fusion activity is inactive as long as E1 is bound to E2 in mature virion. After virus attachment to target cell and clathrin-mediated endocytosis, acidification of the endosome would induce dissociation of E1/E2 heterodimer and concomitant trimerization of the E1 subunits. This E1 homotrimer is fusion active, and promotes release of viral nucleocapsid in cytoplasm after endosome and viral membrane fusion. The cytoplasmic tail of spike glycoprotein E1 modulates virus release. The surface glycoproteins display an irregular helical organization and a pseudo-tetrameric inner nucleocapsid arrangement. The polypeptide is Structural polyprotein (Homo sapiens (Human)).